Reading from the N-terminus, the 129-residue chain is Succinate dehydrogenase assembly factor 3, mitochondrial (129 aa).

The protein belongs to the complex I LYR family. SDHAF3 subfamily. Interacts with the iron-sulfur protein subunit within the SDH catalytic dimer.

It localises to the mitochondrion matrix. Its function is as follows. Plays an essential role in the assembly of succinate dehydrogenase (SDH), an enzyme complex (also referred to as respiratory complex II) that is a component of both the tricarboxylic acid (TCA) cycle and the mitochondrial electron transport chain, and which couples the oxidation of succinate to fumarate with the reduction of ubiquinone (coenzyme Q) to ubiquinol. Promotes maturation of the iron-sulfur protein subunit of the SDH catalytic dimer, protecting it from the deleterious effects of oxidants. May act together with SDHAF1. In Aspergillus fumigatus (strain ATCC MYA-4609 / CBS 101355 / FGSC A1100 / Af293) (Neosartorya fumigata), this protein is Succinate dehydrogenase assembly factor 3, mitochondrial.